The chain runs to 801 residues: Phenylalanine--tRNA ligase beta subunit (801 aa).

One can recognise a tRNA-binding domain in the interval 39 to 148; sequence AGSFTGVKVG…EDAVIGTDFR (110 aa). The 76-residue stretch at 401 to 476 folds into the B5 domain; the sequence is PKPNKVALRR…RIYGYDNIPN (76 aa). Residues D454, D460, E463, and E464 each contribute to the Mg(2+) site. Residues 707–800 form the FDX-ACB domain; that stretch reads SKFPSNRRDI…VSEKFGAALR (94 aa).

The protein belongs to the phenylalanyl-tRNA synthetase beta subunit family. Type 1 subfamily. As to quaternary structure, tetramer of two alpha and two beta subunits. Requires Mg(2+) as cofactor.

It localises to the cytoplasm. It carries out the reaction tRNA(Phe) + L-phenylalanine + ATP = L-phenylalanyl-tRNA(Phe) + AMP + diphosphate + H(+). The protein is Phenylalanine--tRNA ligase beta subunit of Vibrio parahaemolyticus serotype O3:K6 (strain RIMD 2210633).